The following is a 69-amino-acid chain: DNA-directed RNA polymerase subunit omega (69 aa).

The protein belongs to the RNA polymerase subunit omega family. In terms of assembly, the RNAP catalytic core consists of 2 alpha, 1 beta, 1 beta' and 1 omega subunit. When a sigma factor is associated with the core the holoenzyme is formed, which can initiate transcription.

The enzyme catalyses RNA(n) + a ribonucleoside 5'-triphosphate = RNA(n+1) + diphosphate. Functionally, promotes RNA polymerase assembly. Latches the N- and C-terminal regions of the beta' subunit thereby facilitating its interaction with the beta and alpha subunits. In Geotalea daltonii (strain DSM 22248 / JCM 15807 / FRC-32) (Geobacter daltonii), this protein is DNA-directed RNA polymerase subunit omega.